Consider the following 457-residue polypeptide: Cell division protein FtsZ (457 aa).

Residues 26-30, 115-117, Glu-146, Lys-150, and Asp-193 each bind GTP; these read GGGGN and GTG. A compositionally biased stretch (basic and acidic residues) spans 429 to 447; it reads KKDVVRSEESERPAFESER. The tract at residues 429–457 is disordered; the sequence is KKDVVRSEESERPAFESERSSSPTTISFN. The span at 448-457 shows a compositional bias: polar residues; sequence SSSPTTISFN.

This sequence belongs to the FtsZ family. Homodimer. Polymerizes to form a dynamic ring structure in a strictly GTP-dependent manner. Interacts directly with several other division proteins.

It localises to the cytoplasm. Essential cell division protein that forms a contractile ring structure (Z ring) at the future cell division site. The regulation of the ring assembly controls the timing and the location of cell division. One of the functions of the FtsZ ring is to recruit other cell division proteins to the septum to produce a new cell wall between the dividing cells. Binds GTP and shows GTPase activity. The sequence is that of Cell division protein FtsZ from Porphyromonas gingivalis (strain ATCC BAA-308 / W83).